The primary structure comprises 159 residues: Cytochrome b6-f complex subunit 4 (159 aa).

3 consecutive transmembrane segments (helical) span residues 35-55, 93-113, and 127-147; these read ILIF…LAVL, LLGV…PFIE, and ATAV…GAMI.

This sequence belongs to the cytochrome b family. PetD subfamily. The 4 large subunits of the cytochrome b6-f complex are cytochrome b6, subunit IV (17 kDa polypeptide, PetD), cytochrome f and the Rieske protein, while the 4 small subunits are PetG, PetL, PetM and PetN. The complex functions as a dimer.

The protein localises to the cell inner membrane. Component of the cytochrome b6-f complex, which mediates electron transfer between photosystem II (PSII) and photosystem I (PSI), cyclic electron flow around PSI, and state transitions. This chain is Cytochrome b6-f complex subunit 4, found in Gloeobacter violaceus (strain ATCC 29082 / PCC 7421).